The sequence spans 2084 residues: MAP kinase-activating death domain protein (2084 aa).

The uDENN domain maps to 25–352 (TPPMPKGLQG…VPVPGSTRVE (328 aa)). The tract at residues 117–253 (PSSAAGSAGA…SPRASRKRTK (137 aa)) is disordered. The span at 118 to 131 (SSAAGSAGAGNDRP) shows a compositional bias: low complexity. The segment covering 132–152 (GNGGPGGHGGGAGGGAGGGGR) has biased composition (gly residues). Residues 160–173 (FRRESWRKSMERSS) show a composition bias toward basic and acidic residues. Low complexity predominate over residues 174–183 (DSAFSSDYRS). Positions 189–204 (DSDRELTSRRDSDQQR) are enriched in basic and acidic residues. Over residues 205-215 (LHSHHSHHQPH) the composition is skewed to basic residues. The segment covering 234–245 (DSESGGSHSPSP) has biased composition (polar residues). The 142-residue stretch at 373–514 (RFSLVDFPLH…EGTILKNHLK (142 aa)) folds into the cDENN domain. The region spanning 516 to 678 (ALTSMTATNT…EWSLTPTNVA (163 aa)) is the dDENN domain. 7 disordered regions span residues 557-588 (TPPH…NSPA), 730-749 (QPTD…SSSY), 811-863 (VASK…TVGS), 891-963 (QESD…SQSS), 1058-1092 (HSAG…GNNF), 1115-1188 (FGKK…AENQ), and 1305-1382 (SSSL…GQST). Residues 558–588 (PPHSAQASQRNSMSAQGTISSRQPSPMNSPA) show a composition bias toward polar residues. Low complexity predominate over residues 824-839 (SPVSSSSSRSDLSSPS). Positions 913–925 (HPSDSESRPEKKI) are enriched in basic and acidic residues. Over residues 946-963 (GSSGSSSSSPGRQSSQSS) the composition is skewed to low complexity. Residues 1121-1131 (QKQVPVQQKQP) are compositionally biased toward low complexity. The span at 1168-1183 (TQEELTRQQNQERSHS) shows a compositional bias: basic and acidic residues. The span at 1305-1315 (SSSLLSSHAAS) shows a compositional bias: low complexity. Polar residues-rich tracts occupy residues 1324–1353 (RSPS…STQL) and 1370–1382 (RLSS…GQST). A Death domain is found at 1490–1565 (GMDQGPIEMM…GLVYSQEVHN (76 aa)). The span at 1794–1842 (DIHAQQKQKHQQQQQHQQPQQQQQPHQTTTQQNQPTAVASAVPTTTAPA) shows a compositional bias: low complexity. Disordered regions lie at residues 1794 to 1865 (DIHA…RHTV) and 1896 to 2084 (VPVP…HRKH). The segment covering 1845-1858 (VNPNRMTAKSQAGS) has biased composition (polar residues). Residues 1896-1907 (VPVPPTPAPPTS) are compositionally biased toward pro residues. Positions 1921-1932 (SQPSTESLASIS) are enriched in polar residues. 2 stretches are compositionally biased toward pro residues: residues 1933-1953 (SPPP…PAIP) and 1983-1993 (QYTPQPPPPFV). Composition is skewed to low complexity over residues 2001-2029 (LARA…HSQS) and 2059-2077 (ISGS…ASAS).

Belongs to the MADD family.

The protein resides in the cell membrane. It is found in the cytoplasm. Its function is as follows. Guanyl-nucleotide exchange factor that regulates small GTPases. Converts GDP-bound inactive form of Rab3 to the GTP-bound active forms. The protein is MAP kinase-activating death domain protein of Drosophila melanogaster (Fruit fly).